The following is a 457-amino-acid chain: UDP-N-acetylmuramoylalanine--D-glutamate ligase (457 aa).

117 to 123 (GTNGKST) is an ATP binding site.

The protein belongs to the MurCDEF family.

The protein localises to the cytoplasm. The catalysed reaction is UDP-N-acetyl-alpha-D-muramoyl-L-alanine + D-glutamate + ATP = UDP-N-acetyl-alpha-D-muramoyl-L-alanyl-D-glutamate + ADP + phosphate + H(+). It participates in cell wall biogenesis; peptidoglycan biosynthesis. Its function is as follows. Cell wall formation. Catalyzes the addition of glutamate to the nucleotide precursor UDP-N-acetylmuramoyl-L-alanine (UMA). The chain is UDP-N-acetylmuramoylalanine--D-glutamate ligase from Paramagnetospirillum magneticum (strain ATCC 700264 / AMB-1) (Magnetospirillum magneticum).